Here is a 236-residue protein sequence, read N- to C-terminus: Putative lipoprotein MlpA (236 aa).

Residues 1 to 21 (MTKNIVNTALVLVGAGSLLTG) form the signal peptide. Cys-22 carries N-palmitoyl cysteine lipidation. The S-diacylglycerol cysteine moiety is linked to residue Cys-22.

The protein localises to the cell membrane. The chain is Putative lipoprotein MlpA (mlpA) from Myxococcus xanthus.